The chain runs to 309 residues: Aspartate carbamoyltransferase catalytic subunit (309 aa).

Residues R57 and T58 each coordinate carbamoyl phosphate. K86 provides a ligand contact to L-aspartate. Residues R107, H135, and Q138 each coordinate carbamoyl phosphate. 2 residues coordinate L-aspartate: R168 and R228. L267 and P268 together coordinate carbamoyl phosphate.

This sequence belongs to the aspartate/ornithine carbamoyltransferase superfamily. ATCase family. Heterooligomer of catalytic and regulatory chains.

The catalysed reaction is carbamoyl phosphate + L-aspartate = N-carbamoyl-L-aspartate + phosphate + H(+). It participates in pyrimidine metabolism; UMP biosynthesis via de novo pathway; (S)-dihydroorotate from bicarbonate: step 2/3. Functionally, catalyzes the condensation of carbamoyl phosphate and aspartate to form carbamoyl aspartate and inorganic phosphate, the committed step in the de novo pyrimidine nucleotide biosynthesis pathway. This is Aspartate carbamoyltransferase catalytic subunit from Nitrosopumilus maritimus (strain SCM1).